A 141-amino-acid polypeptide reads, in one-letter code: Perlwapin-like protein (141 aa).

Positions 1–19 are cleaved as a signal peptide; it reads MNVYFILFLGVFAFIEVNC. Residues 23–71 enclose the WAP domain; sequence KSKSLGTCPKLDVSTVCVVDYKFNCLFQKQCPSGYRCCTYGCNRRCAAV. Disulfide bonds link Cys30–Cys60, Cys39–Cys64, Cys47–Cys59, Cys53–Cys68, Cys81–Cys105, and Cys92–Cys104.

Component of the organic matrix of calcified shell layers like nacre and prisms.

The protein localises to the secreted. This Mytilus galloprovincialis (Mediterranean mussel) protein is Perlwapin-like protein.